The following is a 76-amino-acid chain: MPKRILQGVVTSDANAQTVTVSVERRFTHPVLKKTIRKSKKYRAHDEKNAFKVGDTVRIIECAPKSKTKRWEVLEA.

This sequence belongs to the universal ribosomal protein uS17 family. In terms of assembly, part of the 30S ribosomal subunit.

Its function is as follows. One of the primary rRNA binding proteins, it binds specifically to the 5'-end of 16S ribosomal RNA. The polypeptide is Small ribosomal subunit protein uS17 (Ruegeria sp. (strain TM1040) (Silicibacter sp.)).